Consider the following 126-residue polypeptide: Muscarinic acetylcholine receptor M4 (126 aa).

The tract at residues M1 to S90 is disordered. Residues M1–V126 lie on the Cytoplasmic side of the membrane. The span at A28 to P39 shows a compositional bias: pro residues. A compositionally biased stretch (polar residues) spans N47–N57. A compositionally biased stretch (low complexity) spans T64 to A75.

Belongs to the G-protein coupled receptor 1 family. Muscarinic acetylcholine receptor subfamily. CHRM4 sub-subfamily.

Its subcellular location is the cell membrane. It localises to the postsynaptic cell membrane. The muscarinic acetylcholine receptor mediates various cellular responses, including inhibition of adenylate cyclase, breakdown of phosphoinositides and modulation of potassium channels through the action of G proteins. Primary transducing effect is inhibition of adenylate cyclase. May couple to multiple functional responses in cell lines. This chain is Muscarinic acetylcholine receptor M4 (CHRM4), found in Bos taurus (Bovine).